Consider the following 136-residue polypeptide: Monothiol glutaredoxin-S3 (136 aa).

Positions 18–135 (EREVRRAVEE…PVLKQAGALW (118 aa)) constitute a Glutaredoxin domain. [2Fe-2S] cluster is bound at residue Cys38. A Responsive for interaction with TGA factors motif is present at residues 133–136 (ALWL).

The protein belongs to the glutaredoxin family. CC-type subfamily.

Its subcellular location is the cytoplasm. The protein localises to the nucleus. Its function is as follows. May only reduce GSH-thiol disulfides, but not protein disulfides. The chain is Monothiol glutaredoxin-S3 (GRXS3) from Oryza sativa subsp. japonica (Rice).